Here is a 528-residue protein sequence, read N- to C-terminus: Golgi resident protein GCP60 (528 aa).

Residues 1–71 (MAAVLNAERL…EAAAGGAAEE (71 aa)) form a disordered region. Ala2 bears the N-acetylalanine; in Golgi resident protein GCP60, N-terminally processed mark. Ser13 is modified (phosphoserine). Thr18 bears the Phosphothreonine mark. Ser20, Ser43, and Ser47 each carry phosphoserine. Positions 34–45 (LLPPPLPPPSPP) are enriched in pro residues. Positions 54–69 (SGEQPEPGEAAAGGAA) are enriched in low complexity. The ACB domain occupies 83–174 (LEELYGLALR…LNRCCHLFST (92 aa)). Residues 174 to 257 (TYVASHKIEK…AALNSQTAVQ (84 aa)) adopt a coiled-coil conformation. Residues 182–230 (EKEEQEKKRKEEEERRRREEEERERLQKEEEKRRREEEERLRREEEERR) form a disordered region. Residues 182 to 240 (EKEEQEKKRKEEEERRRREEEERERLQKEEEKRRREEEERLRREEEERRRIEEERLRLE) are charged amino-acid region (CAR). A q domain; Interaction with PI4KB, TBC1D22A and TBC1D22B region spans residues 241-308 (QQKQQIMAAL…QQQAALQKQQ (68 aa)). The segment at 335 to 362 (NGQAKTHTDSSEKELEPEAAEEALENGP) is disordered. Positions 340–350 (THTDSSEKELE) are enriched in basic and acidic residues. Residues 384–526 (KEKIQQDADS…SKSVYYRVYY (143 aa)) form the GOLD domain. A membrane-binding region spans residues 514–516 (LWR).

Homodimer. Interacts with the C-terminal cytoplasmic domain of giantin/GOLGB1. Interacts with PBR and PKA regulatory subunit RI-alpha. Does not interact with PKA regulatory subunit RI-beta nor PKA regulatory subunit RII-alpha. Interacts (via Q domain) with PI4KB (via N-terminus). Interacts (via Q domain) with TBC1D22A and TBC1D22B; interactions with PI4KB and with TBC1D22A and TBC1D22B are mutually exclusive. Interacts with C10ORF76 and RAB11B. In terms of assembly, (Microbial infection) Interacts (via GOLD domain) with 3A proteins from various picornaviruses, including poliovirus, enterovirus A71, enterovirus D68, hepatitis A virus, human parechovirus 1, poliovirus, Human rhinovirus-14 (Hrv-14), coysackievirus B2, coysackievirus B3, coysackievirus B5, Aichi virus and human klassevirus. Interacts (via GOLD domain) with Aichi virus protein 3A; this interaction allows the formation of a 3A/ACBD3/PI4KB complex in order to synthesize PI4P at the viral RNA replication sites. Interacts with Aichi virus protein 2B. Interacts with Aichi virus protein 2C. As to expression, ubiquitous, with highest expression in testis and ovary.

It is found in the golgi apparatus membrane. It localises to the mitochondrion. In terms of biological role, involved in the maintenance of Golgi structure by interacting with giantin, affecting protein transport between the endoplasmic reticulum and Golgi. Involved in hormone-induced steroid biosynthesis in testicular Leydig cells. Recruits PI4KB to the Golgi apparatus membrane; enhances the enzyme activity of PI4KB activity via its membrane recruitment thereby increasing the local concentration of the substrate in the vicinity of the kinase. Functionally, (Microbial infection) Plays an essential role in Aichi virus RNA replication by recruiting PI4KB at the viral replication sites. The polypeptide is Golgi resident protein GCP60 (ACBD3) (Homo sapiens (Human)).